Consider the following 70-residue polypeptide: Large ribosomal subunit protein bL31c (70 aa).

The protein belongs to the bacterial ribosomal protein bL31 family. Type A subfamily. In terms of assembly, part of the 50S ribosomal subunit.

The protein resides in the plastid. It localises to the chloroplast. Functionally, binds the 23S rRNA. The polypeptide is Large ribosomal subunit protein bL31c (Pyropia yezoensis (Susabi-nori)).